The primary structure comprises 130 residues: Small ribosomal subunit protein uS8 (130 aa).

Lysine 88 is modified (N6-succinyllysine).

The protein belongs to the universal ribosomal protein uS8 family. In terms of assembly, component of the 40S ribosomal subunit. Part of the small subunit (SSU) processome, composed of more than 70 proteins and the RNA chaperone small nucleolar RNA (snoRNA) U3.

It localises to the cytoplasm. The protein localises to the nucleus. It is found in the nucleolus. In terms of biological role, component of the small ribosomal subunit. Part of the small subunit (SSU) processome, first precursor of the small eukaryotic ribosomal subunit. During the assembly of the SSU processome in the nucleolus, many ribosome biogenesis factors, an RNA chaperone and ribosomal proteins associate with the nascent pre-rRNA and work in concert to generate RNA folding, modifications, rearrangements and cleavage as well as targeted degradation of pre-ribosomal RNA by the RNA exosome. Required for proper erythropoiesis. The protein is Small ribosomal subunit protein uS8 (RPS15A) of Pongo abelii (Sumatran orangutan).